The sequence spans 538 residues: Phosphoenolpyruvate carboxykinase (ATP) (538 aa).

Residues arginine 61, tyrosine 195, and lysine 201 each contribute to the substrate site. ATP contacts are provided by residues lysine 201, histidine 220, and 236–244 (GLSGTGKTT). Residues lysine 201 and histidine 220 each contribute to the Mn(2+) site. Aspartate 257 contacts Mn(2+). ATP is bound by residues glutamate 285, arginine 323, and threonine 449. Arginine 323 is a binding site for substrate.

The protein belongs to the phosphoenolpyruvate carboxykinase (ATP) family. Mn(2+) serves as cofactor.

Its subcellular location is the cytoplasm. It catalyses the reaction oxaloacetate + ATP = phosphoenolpyruvate + ADP + CO2. The protein operates within carbohydrate biosynthesis; gluconeogenesis. Involved in the gluconeogenesis. Catalyzes the conversion of oxaloacetate (OAA) to phosphoenolpyruvate (PEP) through direct phosphoryl transfer between the nucleoside triphosphate and OAA. This Bradyrhizobium diazoefficiens (strain JCM 10833 / BCRC 13528 / IAM 13628 / NBRC 14792 / USDA 110) protein is Phosphoenolpyruvate carboxykinase (ATP).